The following is a 365-amino-acid chain: Glutamate 5-kinase 1 (365 aa).

K9 is an ATP binding site. S49, D136, and N148 together coordinate substrate. ATP is bound by residues 168–169 (TD) and 210–216 (TGGMKSK). Positions 276-353 (SGKITVDEGA…DEFHHEEGIE (78 aa)) constitute a PUA domain.

It belongs to the glutamate 5-kinase family.

It localises to the cytoplasm. The enzyme catalyses L-glutamate + ATP = L-glutamyl 5-phosphate + ADP. Its pathway is amino-acid biosynthesis; L-proline biosynthesis; L-glutamate 5-semialdehyde from L-glutamate: step 1/2. Catalyzes the transfer of a phosphate group to glutamate to form L-glutamate 5-phosphate. The sequence is that of Glutamate 5-kinase 1 from Bacillus licheniformis (strain ATCC 14580 / DSM 13 / JCM 2505 / CCUG 7422 / NBRC 12200 / NCIMB 9375 / NCTC 10341 / NRRL NRS-1264 / Gibson 46).